Consider the following 329-residue polypeptide: MPILFDCNATAIQVLRDEASALLESVKQFQEPNDLEAIVKLILKSQEKGGKLVIVGVGKSALVAQKIVASMLSTGNRSAFLHPTEAMHGDLGMVEKNDVILMISYGGESLELLNLVSHLKRLSHKIITFTKSPTSSLSKLGDYYLSLKIKKEACPINTAPTTSTTLTLALGDVLMACLMRAKNFSQEDFASFHPGGLLGKKLFVKVKDLLQTTNLPLIAPSTSFKDALIEMSEKRLGSAILVNDNNELVGVLSDGDVRRALLKGLSLESEVKHFATLKPKSFKNLDALLLEALEFLERHKIQLLVCVDDRNKVLGVLHLHQLLELGLKA.

The SIS domain maps to 38–184 (IVKLILKSQE…MACLMRAKNF (147 aa)). 56 to 61 (GVGKSA) is a binding site for ATP. CBS domains are found at residues 211 to 267 (QTTN…GLSL) and 276 to 329 (TLKP…GLKA).

The protein belongs to the SIS family. GutQ/KpsF subfamily.

This is an uncharacterized protein from Helicobacter pylori (strain J99 / ATCC 700824) (Campylobacter pylori J99).